The primary structure comprises 727 residues: Glucans biosynthesis glucosyltransferase H (727 aa).

A disordered region spans residues 18–38 (SAMPNERPGAMEPQNLSKMPE). 7 consecutive transmembrane segments (helical) span residues 58–78 (FLVV…MGAV), 97–117 (VNFC…LILL), 278–298 (LQQF…GWWV), 408–428 (IMAY…LMLA), 460–480 (LFYI…LLLL), 496–516 (IFSV…MMFI), and 572–592 (LLAW…ISAW).

It belongs to the glycosyltransferase 2 family. OpgH subfamily.

It localises to the cell inner membrane. It functions in the pathway glycan metabolism; osmoregulated periplasmic glucan (OPG) biosynthesis. Involved in the biosynthesis of osmoregulated periplasmic glucans (OPGs). This Shewanella baltica (strain OS223) protein is Glucans biosynthesis glucosyltransferase H.